Reading from the N-terminus, the 122-residue chain is Large ribosomal subunit protein bL17 (122 aa).

It belongs to the bacterial ribosomal protein bL17 family. Part of the 50S ribosomal subunit. Contacts protein L32.

The protein is Large ribosomal subunit protein bL17 of Staphylococcus aureus (strain Mu3 / ATCC 700698).